Consider the following 463-residue polypeptide: Polyadenylate-binding protein-interacting protein 1 (463 aa).

Residues 1 to 86 form a disordered region; it reads MSDGFERAPG…HKRTSPAAQL (86 aa). In terms of domain architecture, MIF4G spans 145–362; the sequence is TEYVQDFLNH…LKLVELRSSN (218 aa). Residues 420–442 form a disordered region; that stretch reads RDYDENGTDGGDSYFEDDDDNEM. The span at 433–442 shows a compositional bias: acidic residues; the sequence is YFEDDDDNEM.

Interacts with the RRM1-RRM2 and C-terminal regions of epabp.

Its subcellular location is the cytoplasm. Acts as a coactivator in the regulation of translation initiation of poly(A)-containing mRNAs. The chain is Polyadenylate-binding protein-interacting protein 1 from Xenopus laevis (African clawed frog).